Reading from the N-terminus, the 343-residue chain is Methionine import ATP-binding protein MetN (343 aa).

The ABC transporter domain occupies 2-241 (IKLSNITKVF…PKTPLAQKFI (240 aa)). 40–46 (SGAGKST) lines the ATP pocket. The C2 domain stretch occupies residues 265 to 343 (CVPMLRLEFT…HVKVEVLGYV (79 aa)). L-methionine contacts are provided by residues 278 to 283 (VDAPLL) and 295 to 296 (NI).

It belongs to the ABC transporter superfamily. Methionine importer (TC 3.A.1.24) family. As to quaternary structure, the complex is composed of two ATP-binding proteins (MetN), two transmembrane proteins (MetI) and a solute-binding protein (MetQ).

The protein localises to the cell inner membrane. It catalyses the reaction L-methionine(out) + ATP + H2O = L-methionine(in) + ADP + phosphate + H(+). The enzyme catalyses D-methionine(out) + ATP + H2O = D-methionine(in) + ADP + phosphate + H(+). ATPase activity is inhibited by intracellular L-methionine. Binding of methionine to the dimerized C-terminal regulatory domain stabilizes an inward-facing, ATPase-inactive conformation of the transporter, and as a consequence, the rate of ATP hydrolysis decreases. ADP is a competitive inhibitor. In terms of biological role, part of the ABC transporter complex MetNIQ involved in methionine import. Responsible for energy coupling to the transport system. It has also been shown to be involved in formyl-L-methionine transport. The sequence is that of Methionine import ATP-binding protein MetN from Escherichia coli (strain K12).